Here is a 318-residue protein sequence, read N- to C-terminus: Polyprenal reductase (318 aa).

Over 1-19 the chain is Cytoplasmic; the sequence is MAPWAAAQLWALNPLRALW. Residues 20 to 40 form a helical membrane-spanning segment; sequence LTLAAAFLLTLLLQLVPPGLL. The Lumenal portion of the chain corresponds to 41-80; that stretch reads PGCALFQDLIRYGKTKREGQSRPAVCRVFDVPKRYFSHFY. The chain crosses the membrane as a helical span at residues 81-101; it reads IISALWNGFLLWHLTQSVFLG. The Cytoplasmic segment spans residues 102 to 119; it reads VPFPNWLHGLLRILGASQ. The chain crosses the membrane as a helical span at residues 120-140; that stretch reads FQGGELALSAFLVLVFLWLHS. Topologically, residues 141-156 are lumenal; it reads LRRLFECFYVSVFSNT. Residues 157-177 form a helical membrane-spanning segment; sequence VIHIVQYCFGLVYYVLTGLTV. Residues 178–194 are Cytoplasmic-facing; sequence LSQVPMDGRNAYVIGKN. Residues 195–215 form a helical membrane-spanning segment; it reads LLMQARWFHILGMLMFIWSSV. Residues 216–265 lie on the Lumenal side of the membrane; it reads HQYKCHVILGNLRKNKAGVVIHCNHRIPFGDWFEYVSSPNYLAELMIYIS. Residues 266 to 286 traverse the membrane as a helical segment; sequence MAVTFGFHNLTWWLVVTYVFF. Over 287–318 the chain is Cytoplasmic; sequence SQALSAFLSHKFYKSKFVSYPKHRKAFLPFLF.

Belongs to the steroid 5-alpha reductase family. Polyprenal reductase subfamily.

Its subcellular location is the endoplasmic reticulum membrane. It catalyses the reaction a di-trans,poly-cis-dolichal + NADP(+) = a di-trans,poly-cis-polyprenal + NADPH + H(+). The catalysed reaction is a 3-oxo-5alpha-steroid + NADP(+) = a 3-oxo-Delta(4)-steroid + NADPH + H(+). It carries out the reaction androst-4-ene-3,17-dione + NADPH + H(+) = 5alpha-androstan-3,17-dione + NADP(+). The enzyme catalyses 17beta-hydroxy-5alpha-androstan-3-one + NADP(+) = testosterone + NADPH + H(+). It participates in protein modification; protein glycosylation. Functionally, plays a key role in early steps of protein N-linked glycosylation by being involved in the conversion of polyprenol into dolichol. Acts as a polyprenal reductase that mediates the reduction of polyprenal into dolichal in a NADP-dependent mechanism. Dolichols are required for the synthesis of dolichol-linked monosaccharides and the oligosaccharide precursor used for N-glycosylation. Also able to convert testosterone (T) into 5-alpha-dihydrotestosterone (DHT). The chain is Polyprenal reductase (SRD5A3) from Ailuropoda melanoleuca (Giant panda).